Here is a 420-residue protein sequence, read N- to C-terminus: Dynein axonemal assembly factor 4 (420 aa).

The CS domain occupies 3–87; sequence LQVSDYSWQQ…KEAAMWETLS (85 aa). The interval 7–103 is mediates interaction with ESR1 and STUB1; the sequence is DYSWQQTKTA…EMMQRIREKS (97 aa). TPR repeat units lie at residues 290-323, 324-357, and 366-399; these read PEWL…NNKM, PLLY…LMPP, and MKAH…DPSN.

Interacts with ZMYND10. Interacts with STUB1. Interacts with ESR1 and ESR2. Interacts with DNAAF2. Interacts with CCT3, CCT4, CCT5 and CCT8. Interacts with DNAAF6/PIH1D3.

The protein localises to the nucleus. Its subcellular location is the cytoplasm. It localises to the cell projection. The protein resides in the neuron projection. It is found in the dynein axonemal particle. Involved in neuronal migration during development of the cerebral neocortex. May regulate the stability and proteasomal degradation of the estrogen receptors that play an important role in neuronal differentiation, survival and plasticity. Axonemal dynein assembly factor required for ciliary motility. The chain is Dynein axonemal assembly factor 4 from Pan troglodytes (Chimpanzee).